We begin with the raw amino-acid sequence, 314 residues long: Aspartate carbamoyltransferase catalytic subunit (314 aa).

Carbamoyl phosphate-binding residues include Arg-64 and Thr-65. Lys-92 is an L-aspartate binding site. 3 residues coordinate carbamoyl phosphate: Arg-114, His-142, and Gln-145. Arg-175 and Arg-230 together coordinate L-aspartate. Residues Gly-271 and Pro-272 each contribute to the carbamoyl phosphate site.

Belongs to the aspartate/ornithine carbamoyltransferase superfamily. ATCase family. Heterododecamer (2C3:3R2) of six catalytic PyrB chains organized as two trimers (C3), and six regulatory PyrI chains organized as three dimers (R2).

It carries out the reaction carbamoyl phosphate + L-aspartate = N-carbamoyl-L-aspartate + phosphate + H(+). It functions in the pathway pyrimidine metabolism; UMP biosynthesis via de novo pathway; (S)-dihydroorotate from bicarbonate: step 2/3. Its function is as follows. Catalyzes the condensation of carbamoyl phosphate and aspartate to form carbamoyl aspartate and inorganic phosphate, the committed step in the de novo pyrimidine nucleotide biosynthesis pathway. This is Aspartate carbamoyltransferase catalytic subunit from Deinococcus radiodurans (strain ATCC 13939 / DSM 20539 / JCM 16871 / CCUG 27074 / LMG 4051 / NBRC 15346 / NCIMB 9279 / VKM B-1422 / R1).